The chain runs to 941 residues: Protocadherin alpha-12 (941 aa).

An N-terminal signal peptide occupies residues 1-29; it reads MVIIGPRGPGSQRLLLSLLLLAAWEVGSG. Cadherin domains follow at residues 30–133, 134–242, 243–350, 351–455, 456–565, and 581–678; these read QLHY…PPVF, RERE…GPAF, DKPS…VPEV, MVTS…APAF, AQPE…APAL, and VPRS…APKT. The Extracellular portion of the chain corresponds to 30 to 697; it reads QLHYSVYEEA…DPEAALVDIN (668 aa). N-linked (GlcNAc...) asparagine glycosylation is found at Asn-257 and Asn-265. A glycan (N-linked (GlcNAc...) asparagine) is linked at Asn-548. A helical transmembrane segment spans residues 698–718; sequence VYLIIAICAVSSLLVLTLLLY. The Cytoplasmic segment spans residues 719–941; that stretch reads TALRCSAPPT…GNSTTDNSDQ (223 aa). PXXP repeat units follow at residues 734–737, 790–793, 823–826, 863–866, and 882–885; these read PGKP, PRQP, PGGP, GPGN, and PGSP. The interval 734-885 is 5 X 4 AA repeats of P-X-X-P; the sequence is PGKPTLVCSS…PDKFIIPGSP (152 aa). The segment at 818 to 941 is disordered; the sequence is ILRAGPGGPD…GNSTTDNSDQ (124 aa). The span at 900 to 914 shows a compositional bias: basic and acidic residues; the sequence is DKSDFITFGKKEETK.

The protein localises to the cell membrane. In terms of biological role, potential calcium-dependent cell-adhesion protein. May be involved in the establishment and maintenance of specific neuronal connections in the brain. The sequence is that of Protocadherin alpha-12 (PCDHA12) from Pan troglodytes (Chimpanzee).